A 1033-amino-acid chain; its full sequence is uncharacterized protein (1033 aa).

4 coiled-coil regions span residues 212-326, 405-582, 615-771, and 797-1019; these read EIFK…KMNN, ILNN…LYKF, LEKE…LKLN, and KMKI…NIDN.

This is an uncharacterized protein from Plasmodium falciparum (isolate 3D7).